Consider the following 429-residue polypeptide: Probable M18 family aminopeptidase 2 (429 aa).

The Zn(2+) site is built by His-82, His-156, and His-401.

It belongs to the peptidase M18 family. It depends on Zn(2+) as a cofactor.

The polypeptide is Probable M18 family aminopeptidase 2 (Pseudomonas savastanoi pv. phaseolicola (strain 1448A / Race 6) (Pseudomonas syringae pv. phaseolicola (strain 1448A / Race 6))).